The primary structure comprises 893 residues: Translation initiation factor IF-2 (893 aa).

Disordered stretches follow at residues 51 to 203 (KEHG…AEAE) and 216 to 299 (EENE…TSMQ). 3 stretches are compositionally biased toward basic and acidic residues: residues 102–203 (ALEE…AEAE), 216–238 (EENE…DADY), and 245–261 (HARE…EQQP). One can recognise a tr-type G domain in the interval 392–561 (GRAPVVTIMG…LLQSEVLELT (170 aa)). The interval 401-408 (GHVDHGKT) is G1. 401–408 (GHVDHGKT) contacts GTP. The segment at 426 to 430 (GITQH) is G2. The tract at residues 447–450 (DTPG) is G3. Residues 447-451 (DTPGH) and 501-504 (NKID) each bind GTP. The G4 stretch occupies residues 501 to 504 (NKID). The segment at 537 to 539 (SAK) is G5.

It belongs to the TRAFAC class translation factor GTPase superfamily. Classic translation factor GTPase family. IF-2 subfamily.

It is found in the cytoplasm. Its function is as follows. One of the essential components for the initiation of protein synthesis. Protects formylmethionyl-tRNA from spontaneous hydrolysis and promotes its binding to the 30S ribosomal subunits. Also involved in the hydrolysis of GTP during the formation of the 70S ribosomal complex. In Aliivibrio fischeri (strain ATCC 700601 / ES114) (Vibrio fischeri), this protein is Translation initiation factor IF-2.